The primary structure comprises 304 residues: 3-diazoavenalumate denitrifying reductase (304 aa).

The protein belongs to the NAD(P)-dependent epimerase/dehydratase family.

It carries out the reaction 3-diazoavenalumate + NADPH + H(+) = avenalumate + N2 + NADP(+). It catalyses the reaction 3-diazoavenalumate + NADH + H(+) = avenalumate + N2 + NAD(+). The enzyme catalyses (E)-3-diazocoumarate + NADPH = N2 + (E)-4-coumarate + NADP(+). The catalysed reaction is (E)-3-diazocoumarate + NADH = N2 + (E)-4-coumarate + NAD(+). Oxidoreductase involved in the biosynthesis of avenalumic acid (AVA). Catalyzes the denitrification of 3-diazoavenalumic acid (3-DAA) to produce AVA. It can also act on 3-diazocoumaric acid (3-DCA). Can use NADPH or NADH as a reductant, with a preference for NADPH. This is 3-diazoavenalumate denitrifying reductase from Streptomyces sp.